Here is a 669-residue protein sequence, read N- to C-terminus: L-type lectin-domain containing receptor kinase V.9 (669 aa).

The signal sequence occupies residues 1 to 21 (MKFFVLVLLLVLQFFSNKALS). The Extracellular portion of the chain corresponds to 22-286 (QSEEGEFGFN…RDSRSTSVKK (265 aa)). Positions 38–259 (SGIAITNSKG…SHYILGWTFK (222 aa)) are legume-lectin like. Residues Asn-53, Asn-75, Asn-124, Asn-206, and Asn-261 are each glycosylated (N-linked (GlcNAc...) asparagine). The chain crosses the membrane as a helical span at residues 287–307 (ILAISLSLTSLAILVFLTISY). The Cytoplasmic portion of the chain corresponds to 308–669 (MLFLKRKKLM…FTEPFVSHGR (362 aa)). Residues 344 to 603 (FRNSELLGKG…LGLFCSHPVA (260 aa)) enclose the Protein kinase domain. ATP-binding positions include 350–358 (LGKGGFGKV) and Lys-373. The active-site Proton acceptor is the Asp-469.

The protein in the C-terminal section; belongs to the protein kinase superfamily. Ser/Thr protein kinase family. This sequence in the N-terminal section; belongs to the leguminous lectin family.

It localises to the cell membrane. It catalyses the reaction L-seryl-[protein] + ATP = O-phospho-L-seryl-[protein] + ADP + H(+). It carries out the reaction L-threonyl-[protein] + ATP = O-phospho-L-threonyl-[protein] + ADP + H(+). The protein is L-type lectin-domain containing receptor kinase V.9 (LECRK59) of Arabidopsis thaliana (Mouse-ear cress).